We begin with the raw amino-acid sequence, 473 residues long: Glutamate--tRNA ligase 2 (473 aa).

Positions 11-21 (PSPTGYLHIGG) match the 'HIGH' region motif. Positions 113–133 (KARAEGRPPRYDGRWRDRDPS) are enriched in basic and acidic residues. Positions 113–136 (KARAEGRPPRYDGRWRDRDPSEAP) are disordered. The short motif at 240 to 244 (KLSKR) is the 'KMSKS' region element. Lysine 243 provides a ligand contact to ATP.

This sequence belongs to the class-I aminoacyl-tRNA synthetase family. Glutamate--tRNA ligase type 1 subfamily. As to quaternary structure, monomer.

The protein localises to the cytoplasm. It catalyses the reaction tRNA(Glu) + L-glutamate + ATP = L-glutamyl-tRNA(Glu) + AMP + diphosphate. In terms of biological role, catalyzes the attachment of glutamate to tRNA(Glu) in a two-step reaction: glutamate is first activated by ATP to form Glu-AMP and then transferred to the acceptor end of tRNA(Glu). In Brucella suis biovar 1 (strain 1330), this protein is Glutamate--tRNA ligase 2.